The primary structure comprises 449 residues: 1H-pyrrole-2-carbonyl-[peptidyl-carrier protein] chlorinase (449 aa).

9 residues coordinate FAD: alanine 16, glutamate 35, arginine 41, histidine 43, valine 44, serine 47, arginine 123, isoleucine 147, and aspartate 316. Chloride contacts are provided by serine 327 and glycine 328. An FAD-binding site is contributed by valine 329.

It belongs to the flavin-dependent halogenase family. Homodimer.

The catalysed reaction is (1H-pyrrole-2-carbonyl)-[peptidyl-carrier protein] + 2 FADH2 + 2 chloride + 2 O2 = (4,5-dichloro-1H-pyrrole-2-carbonyl)-[peptidyl-carrier protein] + 2 FAD + 4 H2O. It carries out the reaction (1H-pyrrole-2-carbonyl)-[peptidyl-carrier protein] + FADH2 + chloride + O2 = (5-chloro-1H-pyrrole-2-carbonyl)-[peptidyl-carrier protein] + FAD + 2 H2O. The enzyme catalyses (5-chloro-1H-pyrrole-2-carbonyl)-[peptidyl-carrier protein] + FADH2 + chloride + O2 = (4,5-dichloro-1H-pyrrole-2-carbonyl)-[peptidyl-carrier protein] + FAD + 2 H2O. It participates in antibiotic biosynthesis. Involved in the biosynthesis of the antibiotic pyoluteorin. Catalyzes the dichlorination of the pyrrole ring of pyrrolyl-S-PltL, generating the 5-chloropyrrolyl-S-PltL intermediate and then the 4,5-dichloropyrrolyl-S-PltL product. In Pseudomonas fluorescens (strain ATCC BAA-477 / NRRL B-23932 / Pf-5), this protein is 1H-pyrrole-2-carbonyl-[peptidyl-carrier protein] chlorinase.